A 545-amino-acid polypeptide reads, in one-letter code: Glucose-6-phosphate isomerase (545 aa).

E351 serves as the catalytic Proton donor. Active-site residues include H382 and K510.

This sequence belongs to the GPI family.

It localises to the cytoplasm. It catalyses the reaction alpha-D-glucose 6-phosphate = beta-D-fructose 6-phosphate. Its pathway is carbohydrate biosynthesis; gluconeogenesis. The protein operates within carbohydrate degradation; glycolysis; D-glyceraldehyde 3-phosphate and glycerone phosphate from D-glucose: step 2/4. Catalyzes the reversible isomerization of glucose-6-phosphate to fructose-6-phosphate. The chain is Glucose-6-phosphate isomerase from Helicobacter pylori (strain G27).